Reading from the N-terminus, the 95-residue chain is Small ribosomal subunit protein bS6 (95 aa).

Belongs to the bacterial ribosomal protein bS6 family.

In terms of biological role, binds together with bS18 to 16S ribosomal RNA. The chain is Small ribosomal subunit protein bS6 (rpsF) from Halalkalibacterium halodurans (strain ATCC BAA-125 / DSM 18197 / FERM 7344 / JCM 9153 / C-125) (Bacillus halodurans).